Consider the following 334-residue polypeptide: N-acetyl-gamma-glutamyl-phosphate reductase (334 aa).

Residue Cys154 is part of the active site.

This sequence belongs to the NAGSA dehydrogenase family. Type 1 subfamily.

Its subcellular location is the cytoplasm. It carries out the reaction N-acetyl-L-glutamate 5-semialdehyde + phosphate + NADP(+) = N-acetyl-L-glutamyl 5-phosphate + NADPH + H(+). Its pathway is amino-acid biosynthesis; L-arginine biosynthesis; N(2)-acetyl-L-ornithine from L-glutamate: step 3/4. Its function is as follows. Catalyzes the NADPH-dependent reduction of N-acetyl-5-glutamyl phosphate to yield N-acetyl-L-glutamate 5-semialdehyde. This Pectobacterium carotovorum subsp. carotovorum (strain PC1) protein is N-acetyl-gamma-glutamyl-phosphate reductase.